A 169-amino-acid polypeptide reads, in one-letter code: Lipoprotein signal peptidase (169 aa).

Helical transmembrane passes span 59-79 and 84-104; these read PTVL…YVIW and TTLF…NMID. Residues D113 and D139 contribute to the active site. Residues 132 to 152 traverse the membrane as a helical segment; sequence WPIFNIADSAITIGACMLMIF.

The protein belongs to the peptidase A8 family.

It localises to the cell inner membrane. The enzyme catalyses Release of signal peptides from bacterial membrane prolipoproteins. Hydrolyzes -Xaa-Yaa-Zaa-|-(S,diacylglyceryl)Cys-, in which Xaa is hydrophobic (preferably Leu), and Yaa (Ala or Ser) and Zaa (Gly or Ala) have small, neutral side chains.. It participates in protein modification; lipoprotein biosynthesis (signal peptide cleavage). This protein specifically catalyzes the removal of signal peptides from prolipoproteins. The sequence is that of Lipoprotein signal peptidase from Pelodictyon phaeoclathratiforme (strain DSM 5477 / BU-1).